The sequence spans 424 residues: CUGBP Elav-like family member 4 (424 aa).

Residues 8-27 (VANGQPDNSSLSSNPTGHMN) form a disordered region. Polar residues predominate over residues 9–24 (ANGQPDNSSLSSNPTG). RRM domains lie at 47-128 (IKLF…PADS) and 342-417 (PQPP…LKRP).

The protein belongs to the CELF/BRUNOL family.

It is found in the nucleus. The protein localises to the cytoplasm. In terms of biological role, RNA-binding protein that may be implicated in the regulation of pre-mRNA alternative splicing. In Xenopus tropicalis (Western clawed frog), this protein is CUGBP Elav-like family member 4 (celf4).